A 228-amino-acid chain; its full sequence is Ribose-5-phosphate isomerase A (228 aa).

Substrate-binding positions include 26–29 (SGST), 81–84 (DGAD), and 94–97 (KGGG). Glu103 functions as the Proton acceptor in the catalytic mechanism. Lys121 is a substrate binding site.

The protein belongs to the ribose 5-phosphate isomerase family. As to quaternary structure, homodimer.

It catalyses the reaction aldehydo-D-ribose 5-phosphate = D-ribulose 5-phosphate. It participates in carbohydrate degradation; pentose phosphate pathway; D-ribose 5-phosphate from D-ribulose 5-phosphate (non-oxidative stage): step 1/1. Its function is as follows. Catalyzes the reversible conversion of ribose-5-phosphate to ribulose 5-phosphate. The sequence is that of Ribose-5-phosphate isomerase A from Shouchella clausii (strain KSM-K16) (Alkalihalobacillus clausii).